We begin with the raw amino-acid sequence, 309 residues long: Vomeronasal type-1 receptor 46 (309 aa).

Residues M1–E20 are Extracellular-facing. The helical transmembrane segment at V21–G41 threads the bilayer. Residues E42–L50 are Cytoplasmic-facing. Residues Y51–V71 traverse the membrane as a helical segment. Over D72–C85 the chain is Extracellular. C85 and C171 are oxidised to a cystine. A helical membrane pass occupies residues T86–L106. Over N107–G134 the chain is Cytoplasmic. A helical transmembrane segment spans residues A135–A155. Residues S156 to E192 lie on the Extracellular side of the membrane. The N-linked (GlcNAc...) asparagine glycan is linked to N158. The chain crosses the membrane as a helical span at residues A193–H213. At K214–R237 the chain is on the cytoplasmic side. A helical membrane pass occupies residues T238–Y258. Topologically, residues S259–S267 are extracellular. A helical membrane pass occupies residues I268–F288. Topologically, residues I289–I309 are cytoplasmic.

This sequence belongs to the G-protein coupled receptor 1 family.

Its subcellular location is the cell membrane. Functionally, putative pheromone receptor implicated in the regulation of social and reproductive behavior. This chain is Vomeronasal type-1 receptor 46 (Vmn1r46), found in Mus musculus (Mouse).